The primary structure comprises 153 residues: 6,7-dimethyl-8-ribityllumazine synthase (153 aa).

Residues Trp-22, 56–58 (SYE), and 80–82 (AVI) each bind 5-amino-6-(D-ribitylamino)uracil. 85–86 (AT) serves as a coordination point for (2S)-2-hydroxy-3-oxobutyl phosphate. Residue His-88 is the Proton donor of the active site. Residue Leu-113 coordinates 5-amino-6-(D-ribitylamino)uracil. Arg-127 provides a ligand contact to (2S)-2-hydroxy-3-oxobutyl phosphate.

Belongs to the DMRL synthase family.

The catalysed reaction is (2S)-2-hydroxy-3-oxobutyl phosphate + 5-amino-6-(D-ribitylamino)uracil = 6,7-dimethyl-8-(1-D-ribityl)lumazine + phosphate + 2 H2O + H(+). It participates in cofactor biosynthesis; riboflavin biosynthesis; riboflavin from 2-hydroxy-3-oxobutyl phosphate and 5-amino-6-(D-ribitylamino)uracil: step 1/2. Catalyzes the formation of 6,7-dimethyl-8-ribityllumazine by condensation of 5-amino-6-(D-ribitylamino)uracil with 3,4-dihydroxy-2-butanone 4-phosphate. This is the penultimate step in the biosynthesis of riboflavin. This is 6,7-dimethyl-8-ribityllumazine synthase from Herpetosiphon aurantiacus (strain ATCC 23779 / DSM 785 / 114-95).